The following is a 563-amino-acid chain: Arginine--tRNA ligase (563 aa).

Positions 134 to 144 (ANPTGLLHMGN) match the 'HIGH' region motif.

Belongs to the class-I aminoacyl-tRNA synthetase family. Monomer.

The protein localises to the cytoplasm. It catalyses the reaction tRNA(Arg) + L-arginine + ATP = L-arginyl-tRNA(Arg) + AMP + diphosphate. This is Arginine--tRNA ligase from Heliobacterium modesticaldum (strain ATCC 51547 / Ice1).